Reading from the N-terminus, the 94-residue chain is Translation initiation factor 1A 2 (94 aa).

Positions 6–80 (GRRNLRMPSD…EKANIEWRYS (75 aa)) constitute an S1-like domain.

The protein belongs to the eIF-1A family.

Seems to be required for maximal rate of protein biosynthesis. Enhances ribosome dissociation into subunits and stabilizes the binding of the initiator Met-tRNA(I) to 40 S ribosomal subunits. This Haloquadratum walsbyi (strain DSM 16790 / HBSQ001) protein is Translation initiation factor 1A 2.